The sequence spans 532 residues: NMDA receptor synaptonuclear signaling and neuronal migration factor (532 aa).

G2 carries N-myristoyl glycine lipidation. The tract at residues 2–235 (GAAASRRRAL…FSFQTATTTM (234 aa)) is necessary and sufficient to elicit dendritic processes and synaptic contacts. 2 disordered regions span residues 34 to 67 (SQSH…APHN) and 127 to 174 (RRQR…GCAK). Positions 38-48 (PENRNGADHLL) are enriched in basic and acidic residues. Basic residues predominate over residues 127-139 (RRQRERHPHHHSQ). Residues 155–164 (PCQSWAGSRQ) show a composition bias toward polar residues. A Phosphoserine modification is found at S206. The short motif at 247-252 (RKRRKR) is the Nuclear localization signal element. Positions 275-315 (RVKAQTFAERRERSFSRSWSDPTPMKADTSHDSRDSSDLQS) are disordered. Residues S292 and S294 each carry the phosphoserine modification. Over residues 302 to 311 (DTSHDSRDSS) the composition is skewed to basic and acidic residues.

This sequence belongs to the NSMF family. As to quaternary structure, interacts with KPNA1; the interaction occurs in a calcium-independent manner after synaptic NMDA receptor stimulation and is required for nuclear import of NSMF but is competed by CABP1. Interacts (via the central NLS-containing motif region) with CABP1 (via EF-hands 1 and 2); the interaction occurs in a calcium-dependent manner after synaptic NMDA receptor stimulation and prevents the nuclear import of NSMF. Cannot be competed by calmodulin. Proteolytically processed after NMDA receptor activation. Cleaved in a calcium-dependent and calpain-sensitive manner. Calpain cleavage is essential for the translocation process from dendrites to the nucleus. In terms of tissue distribution, expressed in the radiatum and pyramidale strata of the hippocampus (at protein level). Strongly expressed in the brain. Expressed in the sensory and motor cortex, hippocampus, olfactory bulb, thalamus and amygdala. In the olfactory bulb expressed in the granular cell layer, mitral cell layer and the glomerular layer. In the hippocampus highly expressed in the regions associated with neuronal cell types as CA1, CA2, CA3 and granule cells of the dentate gyrus. All isoforms have been detected in the molecular layers of the hippocampus.

It localises to the nucleus. Its subcellular location is the nucleus envelope. The protein resides in the nucleus membrane. The protein localises to the nucleus matrix. It is found in the cytoplasm. It localises to the cell cortex. Its subcellular location is the cytoskeleton. The protein resides in the cell membrane. The protein localises to the cell projection. It is found in the dendrite. It localises to the synapse. Its subcellular location is the synaptosome. The protein resides in the postsynaptic density. The protein localises to the membrane. Its function is as follows. Couples NMDA-sensitive glutamate receptor signaling to the nucleus and triggers long-lasting changes in the cytoarchitecture of dendrites and spine synapse processes. Part of the cAMP response element-binding protein (CREB) shut-off signaling pathway. Stimulates outgrowth of olfactory axons and migration of gonadotropin-releasing hormone (GnRH) and luteinizing-hormone-releasing hormone (LHRH) neuronal cells. The polypeptide is NMDA receptor synaptonuclear signaling and neuronal migration factor (Nsmf) (Rattus norvegicus (Rat)).